The sequence spans 137 residues: Nucleoside diphosphate kinase (137 aa).

Lys-9, Phe-57, Arg-85, Thr-91, Arg-102, and Asn-112 together coordinate ATP. Catalysis depends on His-115, which acts as the Pros-phosphohistidine intermediate.

This sequence belongs to the NDK family. Homotetramer. The cofactor is Mg(2+).

It localises to the cytoplasm. It carries out the reaction a 2'-deoxyribonucleoside 5'-diphosphate + ATP = a 2'-deoxyribonucleoside 5'-triphosphate + ADP. It catalyses the reaction a ribonucleoside 5'-diphosphate + ATP = a ribonucleoside 5'-triphosphate + ADP. In terms of biological role, major role in the synthesis of nucleoside triphosphates other than ATP. The ATP gamma phosphate is transferred to the NDP beta phosphate via a ping-pong mechanism, using a phosphorylated active-site intermediate. This is Nucleoside diphosphate kinase from Leptospira biflexa serovar Patoc (strain Patoc 1 / ATCC 23582 / Paris).